Reading from the N-terminus, the 218-residue chain is Peptidyl-tRNA hydrolase (218 aa).

Residue Tyr-19 coordinates tRNA. His-24 acts as the Proton acceptor in catalysis. TRNA contacts are provided by Tyr-68, Asn-70, and Asn-116. A disordered region spans residues 181 to 218 (WNTATQRLNARPAPPKPPKAPKAPQPAAADQPKDESQP). The segment covering 192–204 (PAPPKPPKAPKAP) has biased composition (pro residues).

The protein belongs to the PTH family. In terms of assembly, monomer.

It is found in the cytoplasm. The enzyme catalyses an N-acyl-L-alpha-aminoacyl-tRNA + H2O = an N-acyl-L-amino acid + a tRNA + H(+). Functionally, hydrolyzes ribosome-free peptidyl-tRNAs (with 1 or more amino acids incorporated), which drop off the ribosome during protein synthesis, or as a result of ribosome stalling. Catalyzes the release of premature peptidyl moieties from peptidyl-tRNA molecules trapped in stalled 50S ribosomal subunits, and thus maintains levels of free tRNAs and 50S ribosomes. This Azoarcus sp. (strain BH72) protein is Peptidyl-tRNA hydrolase.